A 122-amino-acid chain; its full sequence is Small ribosomal subunit protein uS13 (122 aa).

Positions 95–122 (GLPVRGQRTKTNARTRKGPKKTIAGKKK) are disordered.

The protein belongs to the universal ribosomal protein uS13 family. In terms of assembly, part of the 30S ribosomal subunit. Forms a loose heterodimer with protein S19. Forms two bridges to the 50S subunit in the 70S ribosome.

Functionally, located at the top of the head of the 30S subunit, it contacts several helices of the 16S rRNA. In the 70S ribosome it contacts the 23S rRNA (bridge B1a) and protein L5 of the 50S subunit (bridge B1b), connecting the 2 subunits; these bridges are implicated in subunit movement. Contacts the tRNAs in the A and P-sites. The sequence is that of Small ribosomal subunit protein uS13 from Corynebacterium glutamicum (strain ATCC 13032 / DSM 20300 / JCM 1318 / BCRC 11384 / CCUG 27702 / LMG 3730 / NBRC 12168 / NCIMB 10025 / NRRL B-2784 / 534).